The sequence spans 479 residues: MSPQTETKASVGFKAGVKEYKLTYYTPEYETKDTDILAAFRVTPQPGVPPEEAGAAVAAESSTGTWTTVWTDGLTSLDRYKGRCYHIEPVPGEETQFIAYVAYPLDLFEEGSVTNMFTSIVGNVFGFKALAALRLEDLRIPPAYTKTFQGPPHGIQVERDKLNKYGRPLLGCTIKPKLGLSAKNYGRAVYECLRGGLDFTKDDENVNSQPFMRWRDRFLFCAEAIYKSQAETGEIKGHYLNATAGTCEEMIKRAVFARELGVPIVMHDYLTGGFTANTSLAHYCRDNGLLLHIHRAMHAVIDRQKNHGMHFRVLAKALRLSGGDHVHAGTVVGKLEGDRESTLGFVDLLRDDYVEKDRSRGIFFTQDWVSLPGVLPVASGGIHVWHMPALTEIFGDDSVLQFGGGTLGHPWGNAPGAVANRVALEACVQARNEGRDLAVEGNEIIREACKWSPELAAACEVWKEIRFNFPTVDKLDGQE.

A propeptide spanning residues 1–2 (MS) is cleaved from the precursor. Substrate contacts are provided by Asn-123 and Thr-173. The active-site Proton acceptor is the Lys-175. A substrate-binding site is contributed by Lys-177. Mg(2+)-binding residues include Lys-201, Asp-203, and Glu-204. Position 201 is an N6-carboxylysine (Lys-201). Ser-208 is subject to Phosphoserine. His-294 serves as the catalytic Proton acceptor. 2 residues coordinate substrate: Arg-295 and His-327. Phosphothreonine is present on Thr-330. Ser-379 contributes to the substrate binding site.

It belongs to the RuBisCO large chain family. Type I subfamily. Heterohexadecamer of 8 large chains and 8 small chains; disulfide-linked. The disulfide link is formed within the large subunit homodimers. The cofactor is Mg(2+). The disulfide bond which can form in the large chain dimeric partners within the hexadecamer appears to be associated with oxidative stress and protein turnover.

The protein resides in the plastid. It localises to the chloroplast. The enzyme catalyses 2 (2R)-3-phosphoglycerate + 2 H(+) = D-ribulose 1,5-bisphosphate + CO2 + H2O. It catalyses the reaction D-ribulose 1,5-bisphosphate + O2 = 2-phosphoglycolate + (2R)-3-phosphoglycerate + 2 H(+). In terms of biological role, ruBisCO catalyzes two reactions: the carboxylation of D-ribulose 1,5-bisphosphate, the primary event in carbon dioxide fixation, as well as the oxidative fragmentation of the pentose substrate in the photorespiration process. Both reactions occur simultaneously and in competition at the same active site. In Arabis hirsuta (Hairy rock-cress), this protein is Ribulose bisphosphate carboxylase large chain.